Consider the following 115-residue polypeptide: Large ribosomal subunit protein bL20 (115 aa).

Belongs to the bacterial ribosomal protein bL20 family.

In terms of biological role, binds directly to 23S ribosomal RNA and is necessary for the in vitro assembly process of the 50S ribosomal subunit. It is not involved in the protein synthesizing functions of that subunit. This Borrelia garinii subsp. bavariensis (strain ATCC BAA-2496 / DSM 23469 / PBi) (Borreliella bavariensis) protein is Large ribosomal subunit protein bL20.